Reading from the N-terminus, the 89-residue chain is Small ribosomal subunit protein uS15 (89 aa).

The protein belongs to the universal ribosomal protein uS15 family. In terms of assembly, part of the 30S ribosomal subunit. Forms a bridge to the 50S subunit in the 70S ribosome, contacting the 23S rRNA.

In terms of biological role, one of the primary rRNA binding proteins, it binds directly to 16S rRNA where it helps nucleate assembly of the platform of the 30S subunit by binding and bridging several RNA helices of the 16S rRNA. Its function is as follows. Forms an intersubunit bridge (bridge B4) with the 23S rRNA of the 50S subunit in the ribosome. This Trichodesmium erythraeum (strain IMS101) protein is Small ribosomal subunit protein uS15.